The primary structure comprises 414 residues: Tyrosine--tRNA ligase (414 aa).

Positions Pro-57–His-66 match the 'HIGH' region motif. Residues Lys-241–Ser-245 carry the 'KMSKS' region motif. Position 244 (Lys-244) interacts with ATP. An S4 RNA-binding domain is found at Val-352 to Leu-413.

It belongs to the class-I aminoacyl-tRNA synthetase family. TyrS type 2 subfamily. As to quaternary structure, homodimer.

The protein resides in the cytoplasm. The catalysed reaction is tRNA(Tyr) + L-tyrosine + ATP = L-tyrosyl-tRNA(Tyr) + AMP + diphosphate + H(+). Catalyzes the attachment of tyrosine to tRNA(Tyr) in a two-step reaction: tyrosine is first activated by ATP to form Tyr-AMP and then transferred to the acceptor end of tRNA(Tyr). This chain is Tyrosine--tRNA ligase, found in Shouchella clausii (strain KSM-K16) (Alkalihalobacillus clausii).